The primary structure comprises 305 residues: Methionyl-tRNA formyltransferase (305 aa).

Residue Ser-111–Pro-114 participates in (6S)-5,6,7,8-tetrahydrofolate binding.

This sequence belongs to the Fmt family.

It catalyses the reaction L-methionyl-tRNA(fMet) + (6R)-10-formyltetrahydrofolate = N-formyl-L-methionyl-tRNA(fMet) + (6S)-5,6,7,8-tetrahydrofolate + H(+). Functionally, attaches a formyl group to the free amino group of methionyl-tRNA(fMet). The formyl group appears to play a dual role in the initiator identity of N-formylmethionyl-tRNA by promoting its recognition by IF2 and preventing the misappropriation of this tRNA by the elongation apparatus. The chain is Methionyl-tRNA formyltransferase from Helicobacter pylori (strain P12).